The primary structure comprises 183 residues: Crossover junction endodeoxyribonuclease RuvC (183 aa).

Catalysis depends on residues aspartate 16, glutamate 75, and aspartate 147. Aspartate 16, glutamate 75, and aspartate 147 together coordinate Mg(2+).

It belongs to the RuvC family. As to quaternary structure, homodimer which binds Holliday junction (HJ) DNA. The HJ becomes 2-fold symmetrical on binding to RuvC with unstacked arms; it has a different conformation from HJ DNA in complex with RuvA. In the full resolvosome a probable DNA-RuvA(4)-RuvB(12)-RuvC(2) complex forms which resolves the HJ. Mg(2+) serves as cofactor.

The protein resides in the cytoplasm. It carries out the reaction Endonucleolytic cleavage at a junction such as a reciprocal single-stranded crossover between two homologous DNA duplexes (Holliday junction).. Its function is as follows. The RuvA-RuvB-RuvC complex processes Holliday junction (HJ) DNA during genetic recombination and DNA repair. Endonuclease that resolves HJ intermediates. Cleaves cruciform DNA by making single-stranded nicks across the HJ at symmetrical positions within the homologous arms, yielding a 5'-phosphate and a 3'-hydroxyl group; requires a central core of homology in the junction. The consensus cleavage sequence is 5'-(A/T)TT(C/G)-3'. Cleavage occurs on the 3'-side of the TT dinucleotide at the point of strand exchange. HJ branch migration catalyzed by RuvA-RuvB allows RuvC to scan DNA until it finds its consensus sequence, where it cleaves and resolves the cruciform DNA. This chain is Crossover junction endodeoxyribonuclease RuvC, found in Azoarcus sp. (strain BH72).